Consider the following 194-residue polypeptide: Ion-translocating oxidoreductase complex subunit B (194 aa).

The segment at Met-1–Ser-26 is hydrophobic. The region spanning Glu-32–Arg-90 is the 4Fe-4S domain. 12 residues coordinate [4Fe-4S] cluster: Cys-49, Cys-52, Cys-57, Cys-73, Cys-116, Cys-119, Cys-122, Cys-126, Cys-146, Cys-149, Cys-152, and Cys-156. 4Fe-4S ferredoxin-type domains follow at residues Lys-107–Lys-136 and Leu-137–Val-166.

It belongs to the 4Fe4S bacterial-type ferredoxin family. RnfB subfamily. In terms of assembly, the complex is composed of six subunits: RnfA, RnfB, RnfC, RnfD, RnfE and RnfG. [4Fe-4S] cluster is required as a cofactor.

It is found in the cell inner membrane. Functionally, part of a membrane-bound complex that couples electron transfer with translocation of ions across the membrane. The chain is Ion-translocating oxidoreductase complex subunit B from Alcanivorax borkumensis (strain ATCC 700651 / DSM 11573 / NCIMB 13689 / SK2).